A 442-amino-acid chain; its full sequence is tRNA modification GTPase MnmE (442 aa).

Residues R27, E84, and K124 each coordinate (6S)-5-formyl-5,6,7,8-tetrahydrofolate. The 146-residue stretch at 221–366 (GLHVVIVGAP…LLDALQAFAE (146 aa)) folds into the TrmE-type G domain. GTP contacts are provided by residues 231-236 (NAGKSS), 250-256 (SKEAGTT), and 275-278 (DTAG). The Mg(2+) site is built by S235 and T256. K442 contacts (6S)-5-formyl-5,6,7,8-tetrahydrofolate.

It belongs to the TRAFAC class TrmE-Era-EngA-EngB-Septin-like GTPase superfamily. TrmE GTPase family. As to quaternary structure, homodimer. Heterotetramer of two MnmE and two MnmG subunits. The cofactor is K(+).

It localises to the cytoplasm. Its function is as follows. Exhibits a very high intrinsic GTPase hydrolysis rate. Involved in the addition of a carboxymethylaminomethyl (cmnm) group at the wobble position (U34) of certain tRNAs, forming tRNA-cmnm(5)s(2)U34. This chain is tRNA modification GTPase MnmE, found in Brucella canis (strain ATCC 23365 / NCTC 10854 / RM-666).